The chain runs to 382 residues: Mannitol-1-phosphate 5-dehydrogenase (382 aa).

4–15 lines the NAD(+) pocket; the sequence is AVHFGAGNIGRG.

It belongs to the mannitol dehydrogenase family.

It carries out the reaction D-mannitol 1-phosphate + NAD(+) = beta-D-fructose 6-phosphate + NADH + H(+). The polypeptide is Mannitol-1-phosphate 5-dehydrogenase (Vibrio campbellii (strain ATCC BAA-1116)).